Consider the following 220-residue polypeptide: Histone H1B (220 aa).

Disordered stretches follow at residues methionine 1 to serine 45 and glutamine 99 to lysine 220. Low complexity predominate over residues lysine 28–serine 45. The 74-residue stretch at serine 40–lysine 113 folds into the H15 domain. 4 stretches are compositionally biased toward basic residues: residues alanine 122–lysine 134, lysine 141–lysine 151, serine 158–threonine 196, and lysine 204–lysine 220.

This sequence belongs to the histone H1/H5 family.

Its subcellular location is the nucleus. It localises to the chromosome. Its function is as follows. Histones H1 are necessary for the condensation of nucleosome chains into higher-order structures. The protein is Histone H1B of Xenopus laevis (African clawed frog).